The primary structure comprises 282 residues: Probable porphobilinogen deaminase (282 aa).

Cysteine 233 is subject to S-(dipyrrolylmethanemethyl)cysteine.

This sequence belongs to the HMBS family. The cofactor is dipyrromethane.

The enzyme catalyses 4 porphobilinogen + H2O = hydroxymethylbilane + 4 NH4(+). Its pathway is porphyrin-containing compound metabolism; protoporphyrin-IX biosynthesis; coproporphyrinogen-III from 5-aminolevulinate: step 2/4. Tetrapolymerization of the monopyrrole PBG into the hydroxymethylbilane pre-uroporphyrinogen in several discrete steps. The protein is Probable porphobilinogen deaminase of Picrophilus torridus (strain ATCC 700027 / DSM 9790 / JCM 10055 / NBRC 100828 / KAW 2/3).